We begin with the raw amino-acid sequence, 349 residues long: Phenylalanine--tRNA ligase alpha subunit (349 aa).

Residue E259 participates in Mg(2+) binding.

This sequence belongs to the class-II aminoacyl-tRNA synthetase family. Phe-tRNA synthetase alpha subunit type 1 subfamily. Tetramer of two alpha and two beta subunits. Mg(2+) serves as cofactor.

It is found in the cytoplasm. It catalyses the reaction tRNA(Phe) + L-phenylalanine + ATP = L-phenylalanyl-tRNA(Phe) + AMP + diphosphate + H(+). This is Phenylalanine--tRNA ligase alpha subunit from Lactobacillus helveticus (strain DPC 4571).